The following is an 802-amino-acid chain: G-type lectin S-receptor-like serine/threonine-protein kinase At1g61550 (802 aa).

A signal peptide spans 1–19 (MTRFACFLFSTLLLSFSYA). The Bulb-type lectin domain maps to 20–139 (AITPTSPLSI…VSGITLWQSF (120 aa)). The Extracellular segment spans residues 20–421 (AITPTSPLSI…EMGGNQRKKT (402 aa)). 5 N-linked (GlcNAc...) asparagine glycosylation sites follow: asparagine 48, asparagine 89, asparagine 112, asparagine 231, and asparagine 262. Residues 273-309 (PANTCDFYGVCGPFGLCVMSIPPKCKCFKGFVPQFSE) form the EGF-like domain. Disulfide bonds link cysteine 277–cysteine 289 and cysteine 283–cysteine 297. N-linked (GlcNAc...) asparagine glycosylation is found at asparagine 315, asparagine 331, and asparagine 370. A PAN domain is found at 328-410 (CQGNSTGRHV…GELLSIRLAS (83 aa)). Cystine bridges form between cysteine 363-cysteine 384 and cysteine 367-cysteine 373. A helical membrane pass occupies residues 422–442 (IIASIVSISLFVTLASAAFGF). Residues 443-802 (WRYRLKHNAI…EVTQSVVLGR (360 aa)) are Cytoplasmic-facing. The Protein kinase domain occupies 489–774 (FSLVNKLGQG…DLPLPKEPTF (286 aa)). Residues 495–503 (LGQGGFGPV) and lysine 517 contribute to the ATP site. 2 positions are modified to phosphoserine: serine 523 and serine 538. The segment at 578 to 595 (RKRVEIDWPKRFSIIQGI) is caM-binding. Aspartate 614 serves as the catalytic Proton acceptor. Phosphoserine occurs at positions 618 and 631. Threonine 648 bears the Phosphothreonine mark. Serine 691 bears the Phosphoserine mark.

Belongs to the protein kinase superfamily. Ser/Thr protein kinase family.

It localises to the cell membrane. It carries out the reaction L-seryl-[protein] + ATP = O-phospho-L-seryl-[protein] + ADP + H(+). The enzyme catalyses L-threonyl-[protein] + ATP = O-phospho-L-threonyl-[protein] + ADP + H(+). The protein is G-type lectin S-receptor-like serine/threonine-protein kinase At1g61550 of Arabidopsis thaliana (Mouse-ear cress).